The following is a 294-amino-acid chain: Phosphatidylserine decarboxylase proenzyme (294 aa).

Active-site charge relay system; for autoendoproteolytic cleavage activity residues include D100, H157, and S261. S261 functions as the Schiff-base intermediate with substrate; via pyruvic acid; for decarboxylase activity in the catalytic mechanism. Position 261 is a pyruvic acid (Ser); by autocatalysis (S261).

Belongs to the phosphatidylserine decarboxylase family. PSD-B subfamily. Prokaryotic type I sub-subfamily. As to quaternary structure, heterodimer of a large membrane-associated beta subunit and a small pyruvoyl-containing alpha subunit. It depends on pyruvate as a cofactor. Post-translationally, is synthesized initially as an inactive proenzyme. Formation of the active enzyme involves a self-maturation process in which the active site pyruvoyl group is generated from an internal serine residue via an autocatalytic post-translational modification. Two non-identical subunits are generated from the proenzyme in this reaction, and the pyruvate is formed at the N-terminus of the alpha chain, which is derived from the carboxyl end of the proenzyme. The autoendoproteolytic cleavage occurs by a canonical serine protease mechanism, in which the side chain hydroxyl group of the serine supplies its oxygen atom to form the C-terminus of the beta chain, while the remainder of the serine residue undergoes an oxidative deamination to produce ammonia and the pyruvoyl prosthetic group on the alpha chain. During this reaction, the Ser that is part of the protease active site of the proenzyme becomes the pyruvoyl prosthetic group, which constitutes an essential element of the active site of the mature decarboxylase.

The protein localises to the cell membrane. The catalysed reaction is a 1,2-diacyl-sn-glycero-3-phospho-L-serine + H(+) = a 1,2-diacyl-sn-glycero-3-phosphoethanolamine + CO2. The protein operates within phospholipid metabolism; phosphatidylethanolamine biosynthesis; phosphatidylethanolamine from CDP-diacylglycerol: step 2/2. In terms of biological role, catalyzes the formation of phosphatidylethanolamine (PtdEtn) from phosphatidylserine (PtdSer). The sequence is that of Phosphatidylserine decarboxylase proenzyme from Mannheimia succiniciproducens (strain KCTC 0769BP / MBEL55E).